We begin with the raw amino-acid sequence, 95 residues long: Scytovirin (95 aa).

Residues G3–T41 are SD1. Disulfide bonds link C7–C55, C20–C32, C26–C38, C68–C80, and C74–C86. Residues G51 to T89 form an SD2 region.

Has strong anti-HIV activity against T-tropic strains of HIV-1 and weaker activity against M-tropic strains of HIV-1. Inhibits HIV-1 fusion and infection of CD4 LTR beta-gal cells in vitro. Inhibits fusion of HIV infected CEM-SS cells with uninfected CEM-SS cells, and fusion of HIV-1 Env expressing HL2/3 cells with CD4 LTR beta-gal cells. Binds to HIV gp120, HIV gp160 and to a lesser extent HIV gp41. Binding to HIV gp120 is glycosylation dependent. Binds with high specificity to the tetrasaccharide Man-alpha-1,2-Man-alpha-1,6-Man-alpha-1,6-Man and also binds the higher-order oligosaccharides oligomannose 8 and oligomannose 9. Does not bind to monosaccharides, complex or hybrid N-linked oligosaccharides or chitin. The chain is Scytovirin from Scytonema varium.